We begin with the raw amino-acid sequence, 227 residues long: Ribonuclease 3 (227 aa).

The RNase III domain maps to 5 to 127 (LNALQLRLQH…LIGAVYLDAG (123 aa)). Glu40 provides a ligand contact to Mg(2+). Asp44 is an active-site residue. Mg(2+)-binding residues include Asp113 and Glu116. The active site involves Glu116. Residues 154 to 224 (DAKTALQEWL…ATAMLELLKA (71 aa)) form the DRBM domain.

Belongs to the ribonuclease III family. In terms of assembly, homodimer. The cofactor is Mg(2+).

Its subcellular location is the cytoplasm. The enzyme catalyses Endonucleolytic cleavage to 5'-phosphomonoester.. Functionally, digests double-stranded RNA. Involved in the processing of primary rRNA transcript to yield the immediate precursors to the large and small rRNAs (23S and 16S). Processes some mRNAs, and tRNAs when they are encoded in the rRNA operon. Processes pre-crRNA and tracrRNA of type II CRISPR loci if present in the organism. The chain is Ribonuclease 3 from Delftia acidovorans (strain DSM 14801 / SPH-1).